Consider the following 706-residue polypeptide: DNA ligase (706 aa).

Residues 48-52, 97-98, and glutamate 131 each bind NAD(+); these read DAAYD and SL. Lysine 133 serves as the catalytic N6-AMP-lysine intermediate. NAD(+)-binding residues include arginine 154, glutamate 191, lysine 307, and lysine 331. The Zn(2+) site is built by cysteine 425, cysteine 428, cysteine 443, and cysteine 449. The 79-residue stretch at 628-706 folds into the BRCT domain; the sequence is RADSAVAGKT…EDEWLKLIEG (79 aa).

This sequence belongs to the NAD-dependent DNA ligase family. LigA subfamily. The cofactor is Mg(2+). Requires Mn(2+) as cofactor.

The catalysed reaction is NAD(+) + (deoxyribonucleotide)n-3'-hydroxyl + 5'-phospho-(deoxyribonucleotide)m = (deoxyribonucleotide)n+m + AMP + beta-nicotinamide D-nucleotide.. In terms of biological role, DNA ligase that catalyzes the formation of phosphodiester linkages between 5'-phosphoryl and 3'-hydroxyl groups in double-stranded DNA using NAD as a coenzyme and as the energy source for the reaction. It is essential for DNA replication and repair of damaged DNA. The chain is DNA ligase from Afipia carboxidovorans (strain ATCC 49405 / DSM 1227 / KCTC 32145 / OM5) (Oligotropha carboxidovorans).